The sequence spans 252 residues: Triosephosphate isomerase (252 aa).

Position 9–11 (N9–K11) interacts with substrate. Residue H95 is the Electrophile of the active site. The active-site Proton acceptor is E167. Substrate contacts are provided by residues G173, S213, and G234 to G235.

Belongs to the triosephosphate isomerase family. In terms of assembly, homodimer.

The protein resides in the cytoplasm. It catalyses the reaction D-glyceraldehyde 3-phosphate = dihydroxyacetone phosphate. It participates in carbohydrate biosynthesis; gluconeogenesis. The protein operates within carbohydrate degradation; glycolysis; D-glyceraldehyde 3-phosphate from glycerone phosphate: step 1/1. Its function is as follows. Involved in the gluconeogenesis. Catalyzes stereospecifically the conversion of dihydroxyacetone phosphate (DHAP) to D-glyceraldehyde-3-phosphate (G3P). The chain is Triosephosphate isomerase from Lactiplantibacillus plantarum (strain ATCC BAA-793 / NCIMB 8826 / WCFS1) (Lactobacillus plantarum).